A 274-amino-acid chain; its full sequence is Large ribosomal subunit protein uL2 (274 aa).

Disordered regions lie at residues Gln36–Arg61 and Val223–Arg274. A compositionally biased stretch (polar residues) spans Lys37 to Asn46. Composition is skewed to basic residues over residues Thr50–Arg61 and Lys254–Arg274.

The protein belongs to the universal ribosomal protein uL2 family. As to quaternary structure, part of the 50S ribosomal subunit. Forms a bridge to the 30S subunit in the 70S ribosome.

Functionally, one of the primary rRNA binding proteins. Required for association of the 30S and 50S subunits to form the 70S ribosome, for tRNA binding and peptide bond formation. It has been suggested to have peptidyltransferase activity; this is somewhat controversial. Makes several contacts with the 16S rRNA in the 70S ribosome. The sequence is that of Large ribosomal subunit protein uL2 from Halorhodospira halophila (strain DSM 244 / SL1) (Ectothiorhodospira halophila (strain DSM 244 / SL1)).